A 418-amino-acid chain; its full sequence is Glutamyl-tRNA reductase (418 aa).

Substrate is bound by residues 49–52 (TCNR), S109, 114–116 (EPQ), and Q120. C50 (nucleophile) is an active-site residue. 189–194 (GAGETI) lines the NADP(+) pocket.

This sequence belongs to the glutamyl-tRNA reductase family. In terms of assembly, homodimer.

The catalysed reaction is (S)-4-amino-5-oxopentanoate + tRNA(Glu) + NADP(+) = L-glutamyl-tRNA(Glu) + NADPH + H(+). The protein operates within porphyrin-containing compound metabolism; protoporphyrin-IX biosynthesis; 5-aminolevulinate from L-glutamyl-tRNA(Glu): step 1/2. Functionally, catalyzes the NADPH-dependent reduction of glutamyl-tRNA(Glu) to glutamate 1-semialdehyde (GSA). The polypeptide is Glutamyl-tRNA reductase (Pectobacterium atrosepticum (strain SCRI 1043 / ATCC BAA-672) (Erwinia carotovora subsp. atroseptica)).